The sequence spans 401 residues: Phosphoglycerate kinase (401 aa).

Residues 24–26 (DFN), arginine 40, 63–66 (HFGR), arginine 122, and arginine 155 contribute to the substrate site. ATP contacts are provided by residues lysine 206, glycine 297, glutamate 328, and 357–360 (GGDS).

The protein belongs to the phosphoglycerate kinase family. Monomer.

Its subcellular location is the cytoplasm. It catalyses the reaction (2R)-3-phosphoglycerate + ATP = (2R)-3-phospho-glyceroyl phosphate + ADP. Its pathway is carbohydrate degradation; glycolysis; pyruvate from D-glyceraldehyde 3-phosphate: step 2/5. The polypeptide is Phosphoglycerate kinase (Synechococcus sp. (strain CC9605)).